A 249-amino-acid polypeptide reads, in one-letter code: Aquaporin (249 aa).

At 1–11 (MTRKWIKKLQS) the chain is on the cytoplasmic side. The chain crosses the membrane as a helical span at residues 12–32 (YIGEFFASFIFGFAVYTSIIG). Residues 33–39 (SAQTGQS) are Extracellular-facing. A helical membrane pass occupies residues 40 to 60 (AGPIIVALTIALSGVAIIYSF). Topologically, residues 61–83 (CDITVAHFNPAITFSAMCFRRLP) are cytoplasmic. An NPA motif is present at residues 69–71 (NPA). Residues 84–104 (FFGGIFIIIFQVAGFIIAGLA) traverse the membrane as a helical segment. Residues 105–133 (SVAVLPGKYKNKLEIARPKRVADNVSRGR) lie on the Extracellular side of the membrane. The chain crosses the membrane as a helical span at residues 134-154 (IFGTEFFLTAILVYVAFAVGV). At 155–179 (NPYTPPKDEHGDQLDPDEGLTEGRK) the chain is on the cytoplasmic side. The chain crosses the membrane as a helical span at residues 180–200 (ITAPLAIGFTLGFCALLGIAS). Residues 201–223 (SGGAFNPGIVLSPMILTGTWDFW) lie on the Extracellular side of the membrane. The NPG motif lies at 206-208 (NPG). A helical membrane pass occupies residues 224–246 (WVYLLGQFSGGLLGGGLQRFLLY). Topologically, residues 247–249 (KIF) are cytoplasmic.

This sequence belongs to the MIP/aquaporin (TC 1.A.8) family.

It localises to the cell membrane. Its function is as follows. Water channel required to facilitate the transport of water across membranes. Involved in osmotolerance. The protein is Aquaporin (AQP) of Vairimorpha ceranae (strain BRL01) (Microsporidian parasite).